We begin with the raw amino-acid sequence, 350 residues long: 3-isopropylmalate dehydrogenase (350 aa).

76 to 87 (GPKWDNAPKRPE) contacts NAD(+). Residues R94, R104, R132, and D217 each coordinate substrate. Residues D217, D241, and D245 each coordinate Mg(2+). 275 to 287 (GSAPDIANQNIAN) serves as a coordination point for NAD(+).

This sequence belongs to the isocitrate and isopropylmalate dehydrogenases family. LeuB type 1 subfamily. In terms of assembly, homodimer. The cofactor is Mg(2+). Mn(2+) is required as a cofactor.

The protein localises to the cytoplasm. The enzyme catalyses (2R,3S)-3-isopropylmalate + NAD(+) = 4-methyl-2-oxopentanoate + CO2 + NADH. It participates in amino-acid biosynthesis; L-leucine biosynthesis; L-leucine from 3-methyl-2-oxobutanoate: step 3/4. Functionally, catalyzes the oxidation of 3-carboxy-2-hydroxy-4-methylpentanoate (3-isopropylmalate) to 3-carboxy-4-methyl-2-oxopentanoate. The product decarboxylates to 4-methyl-2 oxopentanoate. This is 3-isopropylmalate dehydrogenase from Listeria monocytogenes serovar 1/2a (strain ATCC BAA-679 / EGD-e).